A 231-amino-acid chain; its full sequence is tRNA (guanine-N(7)-)-methyltransferase (231 aa).

Positions 62, 87, 114, and 137 each coordinate S-adenosyl-L-methionine. Asp137 is a catalytic residue. Substrate is bound by residues Lys141, Asp173, and 210–213 (TKFE).

The protein belongs to the class I-like SAM-binding methyltransferase superfamily. TrmB family.

It catalyses the reaction guanosine(46) in tRNA + S-adenosyl-L-methionine = N(7)-methylguanosine(46) in tRNA + S-adenosyl-L-homocysteine. The protein operates within tRNA modification; N(7)-methylguanine-tRNA biosynthesis. Its function is as follows. Catalyzes the formation of N(7)-methylguanine at position 46 (m7G46) in tRNA. The polypeptide is tRNA (guanine-N(7)-)-methyltransferase (Methylococcus capsulatus (strain ATCC 33009 / NCIMB 11132 / Bath)).